A 74-amino-acid chain; its full sequence is MSCCGGSCGCGSGCKCGSGCGGCGMYPDLEKSTTFTIIQGVAPMNNFEELGEKAAEGGNGCKCGSNCTCDPCNC.

The protein belongs to the metallothionein superfamily. Type 15 family.

Functionally, metallothioneins have a high content of cysteine residues that bind various heavy metals. The chain is Metallothionein-like protein type 2 from Nicotiana plumbaginifolia (Leadwort-leaved tobacco).